The primary structure comprises 376 residues: Erythronate-4-phosphate dehydrogenase (376 aa).

Substrate contacts are provided by Ser45 and Thr66. NAD(+) contacts are provided by Asp146 and Thr175. Residue Arg209 is part of the active site. Asp233 lines the NAD(+) pocket. The active site involves Glu238. His255 (proton donor) is an active-site residue. Gly258 serves as a coordination point for NAD(+). A substrate-binding site is contributed by Tyr259.

The protein belongs to the D-isomer specific 2-hydroxyacid dehydrogenase family. PdxB subfamily. As to quaternary structure, homodimer.

Its subcellular location is the cytoplasm. It carries out the reaction 4-phospho-D-erythronate + NAD(+) = (R)-3-hydroxy-2-oxo-4-phosphooxybutanoate + NADH + H(+). It functions in the pathway cofactor biosynthesis; pyridoxine 5'-phosphate biosynthesis; pyridoxine 5'-phosphate from D-erythrose 4-phosphate: step 2/5. Its function is as follows. Catalyzes the oxidation of erythronate-4-phosphate to 3-hydroxy-2-oxo-4-phosphonooxybutanoate. The chain is Erythronate-4-phosphate dehydrogenase from Baumannia cicadellinicola subsp. Homalodisca coagulata.